Here is a 603-residue protein sequence, read N- to C-terminus: Aspartate--tRNA(Asp/Asn) ligase (603 aa).

Residue E187 participates in L-aspartate binding. Residues 211–214 (QQFK) form an aspartate region. 2 residues coordinate L-aspartate: R233 and H461. 233–235 (RDE) serves as a coordination point for ATP. E495 contacts ATP. R502 contacts L-aspartate. Position 547 to 550 (547 to 550 (GLDR)) interacts with ATP.

The protein belongs to the class-II aminoacyl-tRNA synthetase family. Type 1 subfamily. In terms of assembly, homodimer.

The protein localises to the cytoplasm. It carries out the reaction tRNA(Asx) + L-aspartate + ATP = L-aspartyl-tRNA(Asx) + AMP + diphosphate. Functionally, aspartyl-tRNA synthetase with relaxed tRNA specificity since it is able to aspartylate not only its cognate tRNA(Asp) but also tRNA(Asn). Reaction proceeds in two steps: L-aspartate is first activated by ATP to form Asp-AMP and then transferred to the acceptor end of tRNA(Asp/Asn). The chain is Aspartate--tRNA(Asp/Asn) ligase from Chlorobaculum parvum (strain DSM 263 / NCIMB 8327) (Chlorobium vibrioforme subsp. thiosulfatophilum).